The sequence spans 234 residues: UPF0173 metal-dependent hydrolase Rleg2_1519 (234 aa).

Belongs to the UPF0173 family.

The sequence is that of UPF0173 metal-dependent hydrolase Rleg2_1519 from Rhizobium leguminosarum bv. trifolii (strain WSM2304).